Here is a 115-residue protein sequence, read N- to C-terminus: U3-lycotoxin-Ls1k (115 aa).

A signal peptide spans 1–20; that stretch reads MKSVLLFGVLLVTLFSYSSA. The propeptide occupies 21-44; that stretch reads EMLDDFDQADEDELLSLIEKEEAR. 4 disulfides stabilise this stretch: Cys48-Cys63, Cys55-Cys72, Cys62-Cys87, and Cys74-Cys85.

The protein belongs to the neurotoxin 19 (CSTX) family. 01 subfamily. Expressed by the venom gland.

It localises to the secreted. The protein is U3-lycotoxin-Ls1k of Lycosa singoriensis (Wolf spider).